Consider the following 366-residue polypeptide: Growth hormone secretagogue receptor type 1 (366 aa).

Residues 1-40 are Extracellular-facing; it reads MWNATPSEEPGPNLTLPDLGWDAPPENDSLVEELLPLFPT. Residues N13 and N27 are each glycosylated (N-linked (GlcNAc...) asparagine). Residues 41-66 form a helical membrane-spanning segment; the sequence is PLLAGVTATCVALFVVGIAGNLLTML. Over 67 to 72 the chain is Cytoplasmic; the sequence is VVSRFR. The helical transmembrane segment at 73-96 threads the bilayer; that stretch reads EMRTTTNLYLSSMAFSDLLIFLCM. The Extracellular segment spans residues 97 to 117; sequence PLDLFRLWQYRPWNLGNLLCK. The cysteines at positions 116 and 198 are disulfide-linked. Residues 118–139 traverse the membrane as a helical segment; it reads LFQFVSESCTYATVLTITALSV. Residues 140-162 are Cytoplasmic-facing; the sequence is ERYFAICFPLRAKVVVTKGRVKL. The helical transmembrane segment at 163–183 threads the bilayer; sequence VILVIWAVAFCSAGPIFVLVG. Residues 184–211 lie on the Extracellular side of the membrane; it reads VEHDNGTDPRDTNECRATEFAVRSGLLT. A helical membrane pass occupies residues 212–235; the sequence is VMVWVSSVFFFLPVFCLTVLYSLI. Residues 236-263 are Cytoplasmic-facing; that stretch reads GRKLWRRKRGEAAVGSSLRDQNHKQTVK. Residues 264–285 traverse the membrane as a helical segment; it reads MLAVVVFAFILCWLPFHVGRYL. At 286 to 302 the chain is on the extracellular side; that stretch reads FSKSLEPGSVEIAQISQ. Residues 303–326 form a helical membrane-spanning segment; it reads YCNLVSFVLFYLSAAINPILYNIM. Topologically, residues 327-366 are cytoplasmic; sequence SKKYRVAVFKLLGFEPFSQRKLSTLKDESSRAWTESSINT.

It belongs to the G-protein coupled receptor 1 family. Pituitary and hypothalamus.

The protein resides in the cell membrane. Receptor for ghrelin, coupled to G-alpha-11 proteins. Stimulates growth hormone secretion. Also binds other growth hormone releasing peptides (GHRP) (e.g. Met-enkephalin and GHRP-6) as well as non-peptide, low molecular weight secretagogues (e.g. L-692,429, MK-0677, adenosine). This is Growth hormone secretagogue receptor type 1 (GHSR) from Sus scrofa (Pig).